We begin with the raw amino-acid sequence, 1122 residues long: MRLLYFSMVLLWVLGASECQVIPSSRRTLRVGIAAAQDTQSGSIGWASCGGTLPIAVQYLKSKGFLTDFDVEYYMEYTECDRASVAKAGMKFMKEMNVDVVVGPSCGDALAIMGTLSAIYKKLVLGWGFVSDTQLADTNRFPYVASVQPTAQTLGLATSRILEMFQFDRVALLYYKDDQDYCKSVMDDVEATLSDPDLYPVRIVWKGELQSDNEALTRSTLQAVKSRARIVLLCAISGPEKRNYLISIAQQNMTTNEYVHILLTMRSIGYGVQTSLGKKTFANGLTPLWESFTVAPDGNETNARRAAEKMLVIDVNSDVQDAEFLQYLTKNIADAVRNPPMKCNTSECINASSTSMGSYARHLFDVFYLYGMAVSKLNSTDPTVYGNLNLLMPQMVTSFDGMTGRVQIGQNLYRVPTYQLYGLDEKYEQVALVNMTFYNSSSQLSRGYSDEGRSVWHFWDGTRPLDTPICGFSGRYCPVQFWDQYGVLIFVASIVLIFLICIMLMCFGFMIRGRRAEQERLNSEWQIPSIQLIMPQKEKRKPNSRRSLQSGPSTITGESKMTIDGGFHENYTVQMFEKDLVLTTKHHSMQMNKEEKEKFVKLRKLEHDNLNKFIGLSIDGPQFVAVWKMCSRGSLQDIIARGNFSMDGFFMFCIITDIAEGMNFLHKSFLHLHGNLRSATCLVNDSWQVKLTDFGLGALLEEHTPSKKRLLWAAPEVLRGSLTIHQMDPSADVYSFAIIASEILTKREAWDISNRKEGADEILYMVKKGGNRTIRPELILDAEVSPRLTTLVKDCWSEQPEDRPKAEQICKLLSEMTPRGNTNLMDHVFNMLEEYTSTLEVDIEERTKELTLEKKKADILLSRMLPKQVAERLKAGQTVEPEGFDTVTVLFSDVVKFTQLAAKCSPFQVVNLLNDLYSNFDTIIEEHGVYKVESIGDGYLCVSGLPTKNGYAHIKQIVDMSLKFMDYCKSFKVPHLPREKVELRIGINSGPCVAGVVGLSMPRYCLFGDTVNTASRMESNGKPSMIHMSEAAHSLLTDHYPHQYETSSRGEVIIKGKGVMETFWVLGKTDSDTKSLSTRTTPPITDENWPPQMKEDLKKRAVTPYPERQRSGKSKMDTLKVV.

Positions 1–19 (MRLLYFSMVLLWVLGASEC) are cleaved as a signal peptide. Over 20-486 (QVIPSSRRTL…CPVQFWDQYG (467 aa)) the chain is Extracellular. N-linked (GlcNAc...) asparagine glycosylation is found at asparagine 252, asparagine 299, asparagine 344, asparagine 350, asparagine 378, asparagine 434, and asparagine 439. The chain crosses the membrane as a helical span at residues 487 to 507 (VLIFVASIVLIFLICIMLMCF). At 508-1122 (GFMIRGRRAE…KSKMDTLKVV (615 aa)) the chain is on the cytoplasmic side. Residues 536–562 (QKEKRKPNSRRSLQSGPSTITGESKMT) form a disordered region. A Protein kinase domain is found at 542–830 (PNSRRSLQSG…NTNLMDHVFN (289 aa)). The span at 545–559 (RRSLQSGPSTITGES) shows a compositional bias: polar residues. Residues 888-1018 (TVLFSDVVKF…DTVNTASRME (131 aa)) form the Guanylate cyclase domain. Residues 1071–1122 (SDTKSLSTRTTPPITDENWPPQMKEDLKKRAVTPYPERQRSGKSKMDTLKVV) are disordered. Polar residues predominate over residues 1074–1083 (KSLSTRTTPP). Basic and acidic residues predominate over residues 1107 to 1122 (ERQRSGKSKMDTLKVV).

It belongs to the adenylyl cyclase class-4/guanylyl cyclase family. Expressed in both ASEL and ASER neurons during early embryonic stages and becomes specifically expressed in ASER neuron in early larval stage.

Its subcellular location is the cell membrane. The enzyme catalyses GTP = 3',5'-cyclic GMP + diphosphate. Its function is as follows. Guanylate cyclase involved in the production of the second messenger cGMP. Unlike other guanylate cyclases expressed in ASE neurons, may not play a role in chemotaxis responses to salt ions mediated by ASE sensory neurons. The polypeptide is Receptor-type guanylate cyclase gcy-5 (Caenorhabditis elegans).